The sequence spans 322 residues: ATP-dependent 6-phosphofructokinase (322 aa).

Residues glycine 12, 73–74 (RF), and 103–106 (GDGT) each bind ATP. Position 104 (aspartate 104) interacts with Mg(2+). Substrate is bound at residue 126–128 (TID). Aspartate 128 serves as the catalytic Proton acceptor. Arginine 155 provides a ligand contact to ADP. Residues arginine 163 and 170-172 (MGR) contribute to the substrate site. ADP contacts are provided by residues 186-188 (GSE), lysine 212, and 214-216 (KPS). Substrate-binding positions include glutamate 223, arginine 245, and 251–254 (HTQR).

It belongs to the phosphofructokinase type A (PFKA) family. ATP-dependent PFK group I subfamily. Prokaryotic clade 'B1' sub-subfamily. Homotetramer. Mg(2+) is required as a cofactor.

It is found in the cytoplasm. It catalyses the reaction beta-D-fructose 6-phosphate + ATP = beta-D-fructose 1,6-bisphosphate + ADP + H(+). The protein operates within carbohydrate degradation; glycolysis; D-glyceraldehyde 3-phosphate and glycerone phosphate from D-glucose: step 3/4. Its activity is regulated as follows. Allosterically activated by ADP and other diphosphonucleosides, and allosterically inhibited by phosphoenolpyruvate. Functionally, catalyzes the phosphorylation of D-fructose 6-phosphate to fructose 1,6-bisphosphate by ATP, the first committing step of glycolysis. The protein is ATP-dependent 6-phosphofructokinase of Mesomycoplasma hyopneumoniae (strain 232) (Mycoplasma hyopneumoniae).